Consider the following 241-residue polypeptide: 1-(5-phosphoribosyl)-5-[(5-phosphoribosylamino)methylideneamino] imidazole-4-carboxamide isomerase (241 aa).

Asp-8 serves as the catalytic Proton acceptor. Catalysis depends on Asp-129, which acts as the Proton donor.

It belongs to the HisA/HisF family.

It localises to the cytoplasm. The catalysed reaction is 1-(5-phospho-beta-D-ribosyl)-5-[(5-phospho-beta-D-ribosylamino)methylideneamino]imidazole-4-carboxamide = 5-[(5-phospho-1-deoxy-D-ribulos-1-ylimino)methylamino]-1-(5-phospho-beta-D-ribosyl)imidazole-4-carboxamide. Its pathway is amino-acid biosynthesis; L-histidine biosynthesis; L-histidine from 5-phospho-alpha-D-ribose 1-diphosphate: step 4/9. The protein is 1-(5-phosphoribosyl)-5-[(5-phosphoribosylamino)methylideneamino] imidazole-4-carboxamide isomerase of Rhodospirillum rubrum (strain ATCC 11170 / ATH 1.1.1 / DSM 467 / LMG 4362 / NCIMB 8255 / S1).